Reading from the N-terminus, the 299-residue chain is Dye-decolorizing peroxidase YfeX (299 aa).

A heme-binding site is contributed by H215.

This sequence belongs to the DyP-type peroxidase family. Requires heme b as cofactor.

It is found in the cytoplasm. Its function is as follows. Has both general peroxidase activity and dye-decolorizing activity. Can catalyze the oxidation of 2,2'-azino-bis(3-ethylbenzothiazoline-6-sulphonic acid) (ABTS), and the phenolic compounds guaiacol and catechol. Also decolorizes the anthraquinone dye reactive blue 19 (RB19). This is Dye-decolorizing peroxidase YfeX from Escherichia coli O157:H7.